The primary structure comprises 2090 residues: Host cell factor 1 (2090 aa).

Position 2 is an N-acetylalanine (Ala-2). Ser-6 carries the phosphoserine modification. Kelch repeat units follow at residues 44–89 (LIVV…GFVC), 93–140 (RLLV…RLGH), 148–194 (KCYL…ITYG), 217–265 (KLVI…TIGN), and 266–313 (KMYV…LMDT). Residues Lys-105, Lys-163, and Lys-244 each participate in a glycyl lysine isopeptide (Lys-Gly) (interchain with G-Cter in ubiquitin) cross-link. Lys-282 participates in a covalent cross-link: Glycyl lysine isopeptide (Lys-Gly) (interchain with G-Cter in SUMO2). N6-acetyllysine is present on Lys-288. Residue Lys-363 forms a Glycyl lysine isopeptide (Lys-Gly) (interchain with G-Cter in ubiquitin) linkage. The 104-residue stretch at 366–469 (PPARVQLVRA…TIQVLPTVPG (104 aa)) folds into the Fibronectin type-III 1 domain. A disordered region spans residues 407 to 434 (ATATSPTPNPVPSVPANPPKSPAPAAAA). At Ser-411 the chain carries Phosphoserine. Pro residues predominate over residues 413–428 (TPNPVPSVPANPPKSP). Residues 500–550 (LVTMRPAGQAGKAPVTVTSLPASVRMVVPTQSAQGTVIGSNPQMSGMAALA) form a required for interaction with OGT region. Omega-N-methylarginine is present on residues Arg-504 and Arg-524. A phosphoserine mark is found at Ser-598, Ser-666, and Ser-669. The interval 610 to 722 (LKTAAAQVGT…KGPLPAGTIL (113 aa)) is interaction with SIN3A. The interaction with ZBTB17 stretch occupies residues 750–902 (ILGISSVSPS…SLAGAGAHST (153 aa)). Lys-813 is modified (N6-acetyllysine). An interaction with GABP2 region spans residues 813 to 912 (KIITAVPKIA…SASLATPITT (100 aa)). HCF repeat repeat units follow at residues 1010 to 1035 (TLVC…TVVA), 1072 to 1097 (VRVC…ATSN), and 1101 to 1126 (QHGC…AMSS). A disordered region spans residues 1098 to 1140 (MAGQHGCSNPPCETHETGTTSTATTAMSSMGTGQQRDTRHTSS). Positions 1114–1130 (TGTTSTATTAMSSMGTG) are enriched in low complexity. The HCF repeat 4; degenerate repeat unit spans residues 1157–1182 (TQGTVKPQCQTQQANMTNTTMTVQAT). Ser-1204 is modified (phosphoserine). Arg-1216 bears the Asymmetric dimethylarginine mark. A Phosphoserine modification is found at Ser-1223. HCF repeat repeat units lie at residues 1295–1320 (TQVC…SNAG) and 1323–1348 (QRVC…ATSN). Disordered stretches follow at residues 1302–1374 (PCET…TTST) and 1444–1486 (TVTS…TTVS). Residues 1308-1321 (TGTTNTATTSNAGS) show a composition bias toward low complexity. The HCF repeat 7; degenerate repeat unit spans residues 1358 to 1383 (QQPAGGRPCETHQTTSTGTTMSVSVG). An HCF repeat 8 repeat occupies 1423-1448 (QRVCSNPPCETHETGTTHTATTVTSN). Polar residues predominate over residues 1465 to 1475 (VVSTQGDSANI). A compositionally biased stretch (low complexity) spans 1476–1486 (TSSSGITTTVS). Thr-1500 carries the phosphothreonine modification. Residues Ser-1506, Ser-1559, and Ser-1826 each carry the phosphoserine modification. 2 Fibronectin type-III domains span residues 1853 to 1943 (PPPP…TCLP) and 1945 to 2061 (FPGA…TSKD). Glycyl lysine isopeptide (Lys-Gly) (interchain with G-Cter in ubiquitin) cross-links involve residues Lys-1862 and Lys-1863. Ser-1893 is modified (phosphoserine). The disordered stretch occupies residues 2049-2090 (ATQVRWLQETSKDSSGTKPASKRPMSSPEMKSAPKKSKADGQ). At Lys-2060 the chain carries N6-acetyllysine. A Glycyl lysine isopeptide (Lys-Gly) (interchain with G-Cter in SUMO2) cross-link involves residue Lys-2079.

As to quaternary structure, composed predominantly of six polypeptides ranging from 110 to 150 kDa and a minor 300 kDa polypeptide. The majority of N- and C-terminal cleavage products remain tightly, albeit non-covalently, associated. Interacts with POU2F1, CREB3, ZBTB17, EGR2, E2F4, CREBZF, SP1, GABP2, Sin3 HDAC complex (SIN3A, HDAC1, HDAC2, SUDS3), SAP30, SIN3B and FHL2. Component of a MLL1 complex, composed of at least the core components KMT2A/MLL1, ASH2L, HCFC1, WDR5 and RBBP5, as well as the facultative components BACC1, CHD8, DPY30, E2F6, HCFC2, HSP70, INO80C, KANSL1, LAS1L, MAX, MCRS1, MEN1, MGA, KAT8, PELP1, PHF20, PRP31, RING2, RUVBL1, RUVBL2, SENP3, TAF1, TAF4, TAF6, TAF7, TAF9 and TEX10. Component of a THAP1/THAP3-HCFC1-OGT complex that is required for the regulation of the transcriptional activity of RRM1. Interacts directly with THAP3 (via its HBM). Interacts (via the Kelch-repeat domain) with THAP1 (via the HBM); the interaction recruits HCHC1 to the RRM1. Interacts directly with OGT; the interaction, which requires the HCFC1 cleavage site domain, glycosylates and promotes the proteolytic processing of HCFC1 and retains OGT in the nucleus. Component of the SET1 complex, at least composed of the catalytic subunit (SETD1A or SETD1B), WDR5, WDR82, RBBP5, ASH2L, CXXC1, HCFC1 and DPY30. Component of the NSL complex at least composed of MOF/KAT8, KANSL1, KANSL2, KANSL3, MCRS1, PHF20, OGT1/OGT, WDR5 and HCFC1. Component of a complex at least composed of ZNF335, HCFC1, CCAR2, EMSY, MKI67, RBBP5, ASH2L and WDR5; the complex is formed as a result of interactions between components of a nuclear receptor-mediated transcription complex and a histone methylation complex. Within the complex interacts with ZNF335. Interacts with TET2 and TET3. Interacts with HCFC1R1. Interacts with THAP11. Interacts (via Kelch domain) with KMT2E (via HBM motif). Interacts with E2F1. Accessory scaffold component of the polycomb repressive deubiquitinase (PR-DUB) complex, at least composed of BAP1, one of ASXL1, ASXL2 or (probably) ASXL3 and one of MBD5 or MBD6; the PR-DUB core associates with a number of accessory proteins, including FOXK1, FOXK2, KDM1B, HCFC1, YY1 and OGT. Interacts with YY1 (via Gly-rich region); the interaction is direct. Interacts with BAP1 (via HBM-like motif). Post-translationally, proteolytically cleaved at one or several PPCE--THET sites within the HCF repeats. Cleavage is promoted by O-glycosylation. Further cleavage of the primary N- and C-terminal chains results in a 'trimming' and accumulation of the smaller chains. Cleavage is promoted by O-glycosylation. O-glycosylated. GlcNAcylation by OGT promotes proteolytic processing. In terms of processing, ubiquitinated. Lys-1862 and Lys-1863 are ubiquitinated both via 'Lys-48'- and 'Lys-63'-linked polyubiquitin chains. BAP1 mediated deubiquitination of 'Lys-48'-linked polyubiquitin chains; deubiquitination by BAP1 does not seem to stabilize the protein.

It localises to the cytoplasm. The protein resides in the nucleus. In terms of biological role, transcriptional coregulator. Serves as a scaffold protein, bridging interactions between transcription factors, including THAP11 and ZNF143, and transcriptional coregulators. Involved in control of the cell cycle. Also antagonizes transactivation by ZBTB17 and GABP2; represses ZBTB17 activation of the p15(INK4b) promoter and inhibits its ability to recruit p300. Coactivator for EGR2 and GABP2. Tethers the chromatin modifying Set1/Ash2 histone H3 'Lys-4' methyltransferase (H3K4me) and Sin3 histone deacetylase (HDAC) complexes (involved in the activation and repression of transcription respectively) together. As part of the NSL complex it may be involved in acetylation of nucleosomal histone H4 on several lysine residues. Recruits KMT2E to E2F1 responsive promoters promoting transcriptional activation and thereby facilitates G1 to S phase transition. Modulates expression of homeobox protein PDX1, perhaps acting in concert with transcription factor E2F1, thereby regulating pancreatic beta-cell growth and glucose-stimulated insulin secretion. May negatively modulate transcriptional activity of FOXO3. The protein is Host cell factor 1 of Mesocricetus auratus (Golden hamster).